The chain runs to 891 residues: DNA mismatch repair protein MutS (891 aa).

646–653 serves as a coordination point for ATP; that stretch reads GPNMAGKS.

This sequence belongs to the DNA mismatch repair MutS family.

In terms of biological role, this protein is involved in the repair of mismatches in DNA. It is possible that it carries out the mismatch recognition step. This protein has a weak ATPase activity. The protein is DNA mismatch repair protein MutS of Rickettsia typhi (strain ATCC VR-144 / Wilmington).